The chain runs to 395 residues: Acid ceramidase (395 aa).

The signal sequence occupies residues 1–21; that stretch reads MPGRSCVALVLLAAAVSCAVA. A disulfide bond links Cys31 and Cys340. The active-site Nucleophile is the Cys143. N-linked (GlcNAc...) asparagine glycosylation is found at Asn173, Asn195, Asn259, Asn286, Asn342, and Asn348. Cys388 and Cys392 are joined by a disulfide.

Belongs to the acid ceramidase family. As to quaternary structure, heterodimer; disulfide-linked. The heterodimer is composed of the disulfide-linked alpha and beta chains produced by autocatalytic cleavage of the precursor. Isoform 2: May interact with NR5A1 in the nucleus; the direct interaction would negatively regulate NR5A1 transcriptional activity. N-glycosylated. Post-translationally, proteolytically cleaved into two chains alpha and beta that remain associated via a disulfide bond. Cleavage gives rise to a conformation change that activates the enzyme. The same catalytic Cys residue mediates the autoproteolytic cleavage and subsequent hydrolysis of lipid substrates. The beta chain may undergo an additional C-terminal processing. In terms of tissue distribution, broadly expressed with higher expression in heart.

Its subcellular location is the lysosome. It localises to the secreted. It is found in the nucleus. The protein localises to the cytoplasm. The enzyme catalyses an N-acylsphing-4-enine + H2O = sphing-4-enine + a fatty acid. It carries out the reaction a beta-D-glucosyl-(1&lt;-&gt;1')-N-acylsphing-4-enine + H2O = beta-D-glucosyl-(1&lt;-&gt;1)-sphing-4-enine + a fatty acid. It catalyses the reaction a globoside Gb3Cer + H2O = a lysoGb3 + a fatty acid. The catalysed reaction is a globoside Gb3Cer (d18:1(4E)) + H2O = a lysoGb3(d18:1(4E)) + a fatty acid. The enzyme catalyses N-dodecanoylsphing-4-enine + H2O = dodecanoate + sphing-4-enine. It carries out the reaction N-tetradecanoylsphing-4-enine + H2O = tetradecanoate + sphing-4-enine. It catalyses the reaction N-hexadecanoylsphing-4-enine + H2O = sphing-4-enine + hexadecanoate. The catalysed reaction is N-octadecanoylsphing-4-enine + H2O = sphing-4-enine + octadecanoate. The enzyme catalyses N-dodecanoyl-(4R)-hydroxysphinganine + H2O = (4R)-hydroxysphinganine + dodecanoate. It carries out the reaction N-(dodecanoyl)-sphinganine + H2O = dodecanoate + sphinganine. It catalyses the reaction N-(acetyl)-sphing-4-enine + H2O = sphing-4-enine + acetate. The catalysed reaction is N-(hexanoyl)sphing-4-enine + H2O = hexanoate + sphing-4-enine. The enzyme catalyses N-octanoylsphing-4-enine + H2O = octanoate + sphing-4-enine. It carries out the reaction N-(9Z-octadecenoyl)-sphing-4-enine + H2O = sphing-4-enine + (9Z)-octadecenoate. It catalyses the reaction N-dodecanoylethanolamine + H2O = dodecanoate + ethanolamine. The protein operates within lipid metabolism; sphingolipid metabolism. Its activity is regulated as follows. Activated by Ca(2+), Mg(2+) and Na(+) cations. Inhibited by Zn(2+). Phosphatidylserine and phosphatidic acid stimulate while cardiolipin, phosphatidylcholine, lysophosphatidylcholine, phosphatidylethanolamine, phosphatidylinositol and sphingomyelin inhibit the reverse ceramide synthase activity. Phosphatidic acid, phosphatidylinositol and C16-ceramide inhibit the ceramidase/hydrolase activity. Functionally, lysosomal ceramidase that hydrolyzes sphingolipid ceramides into sphingosine and free fatty acids at acidic pH. Ceramides, sphingosine, and its phosphorylated form sphingosine-1-phosphate are bioactive lipids that mediate cellular signaling pathways regulating several biological processes including cell proliferation, apoptosis and differentiation. Has a higher catalytic efficiency towards C12-ceramides versus other ceramides. Also catalyzes the reverse reaction allowing the synthesis of ceramides from fatty acids and sphingosine. For the reverse synthetic reaction, the natural sphingosine D-erythro isomer is more efficiently utilized as a substrate compared to D-erythro-dihydrosphingosine and D-erythro-phytosphingosine, while the fatty acids with chain lengths of 12 or 14 carbons are the most efficiently used. Also has an N-acylethanolamine hydrolase activity. By regulating the levels of ceramides, sphingosine and sphingosine-1-phosphate in the epidermis, mediates the calcium-induced differentiation of epidermal keratinocytes. Also indirectly regulates tumor necrosis factor/TNF-induced apoptosis. By regulating the intracellular balance between ceramides and sphingosine, in adrenocortical cells, probably also acts as a regulator of steroidogenesis. May directly regulate steroidogenesis by binding the nuclear receptor NR5A1 and negatively regulating its transcriptional activity. This is Acid ceramidase from Homo sapiens (Human).